The sequence spans 488 residues: Arginine biosynthesis bifunctional protein ArgJ, mitochondrial (488 aa).

Residues Thr-227, Lys-250, Thr-261, Glu-340, Asn-483, and Ser-488 each coordinate substrate. The Nucleophile role is filled by Thr-261.

Belongs to the ArgJ family. As to quaternary structure, heterodimer of an alpha and a beta chain. In terms of processing, the alpha and beta chains are autoproteolytically processed from a single precursor protein within the mitochondrion.

It is found in the mitochondrion matrix. It carries out the reaction N(2)-acetyl-L-ornithine + L-glutamate = N-acetyl-L-glutamate + L-ornithine. It catalyses the reaction L-glutamate + acetyl-CoA = N-acetyl-L-glutamate + CoA + H(+). It participates in amino-acid biosynthesis; L-arginine biosynthesis; L-ornithine and N-acetyl-L-glutamate from L-glutamate and N(2)-acetyl-L-ornithine (cyclic): step 1/1. The protein operates within amino-acid biosynthesis; L-arginine biosynthesis; N(2)-acetyl-L-ornithine from L-glutamate: step 1/4. Catalyzes two activities which are involved in the cyclic version of arginine biosynthesis: the synthesis of acetylglutamate from glutamate and acetyl-CoA, and of ornithine by transacetylation between acetylornithine and glutamate. The protein is Arginine biosynthesis bifunctional protein ArgJ, mitochondrial of Thalassiosira pseudonana (Marine diatom).